Reading from the N-terminus, the 274-residue chain is 3-methyl-2-oxobutanoate hydroxymethyltransferase (274 aa).

Mg(2+) contacts are provided by Asp-49 and Asp-88. Residues 49 to 50, Asp-88, and Lys-118 contribute to the 3-methyl-2-oxobutanoate site; that span reads DS. Glu-120 contributes to the Mg(2+) binding site. Residue Glu-187 is the Proton acceptor of the active site.

Belongs to the PanB family. As to quaternary structure, homodecamer; pentamer of dimers. Mg(2+) serves as cofactor.

It localises to the cytoplasm. The enzyme catalyses 3-methyl-2-oxobutanoate + (6R)-5,10-methylene-5,6,7,8-tetrahydrofolate + H2O = 2-dehydropantoate + (6S)-5,6,7,8-tetrahydrofolate. It participates in cofactor biosynthesis; (R)-pantothenate biosynthesis; (R)-pantoate from 3-methyl-2-oxobutanoate: step 1/2. Its function is as follows. Catalyzes the reversible reaction in which hydroxymethyl group from 5,10-methylenetetrahydrofolate is transferred onto alpha-ketoisovalerate to form ketopantoate. In Rhodopseudomonas palustris (strain BisB5), this protein is 3-methyl-2-oxobutanoate hydroxymethyltransferase.